The following is a 287-amino-acid chain: Ret finger protein-like 4A (287 aa).

An RING-type; degenerate zinc finger spans residues Cys11 to Ser53. In terms of domain architecture, B30.2/SPRY spans Glu78–Gly278.

As to quaternary structure, interacts with PSMB1, UBE2A and CCNB1. As to expression, expressed in the ovaries and oocytes (at protein level). Expression restricted to gonads. In testis, present at later stages of spermatogeneis and abundant in elongating spermatids.

The protein resides in the cytoplasm. The protein localises to the nucleus. This chain is Ret finger protein-like 4A (Rfpl4a), found in Mus musculus (Mouse).